A 570-amino-acid chain; its full sequence is Proline--tRNA ligase (570 aa).

The protein belongs to the class-II aminoacyl-tRNA synthetase family. ProS type 1 subfamily. In terms of assembly, homodimer.

It is found in the cytoplasm. The enzyme catalyses tRNA(Pro) + L-proline + ATP = L-prolyl-tRNA(Pro) + AMP + diphosphate. Functionally, catalyzes the attachment of proline to tRNA(Pro) in a two-step reaction: proline is first activated by ATP to form Pro-AMP and then transferred to the acceptor end of tRNA(Pro). As ProRS can inadvertently accommodate and process non-cognate amino acids such as alanine and cysteine, to avoid such errors it has two additional distinct editing activities against alanine. One activity is designated as 'pretransfer' editing and involves the tRNA(Pro)-independent hydrolysis of activated Ala-AMP. The other activity is designated 'posttransfer' editing and involves deacylation of mischarged Ala-tRNA(Pro). The misacylated Cys-tRNA(Pro) is not edited by ProRS. The chain is Proline--tRNA ligase from Desulfotalea psychrophila (strain LSv54 / DSM 12343).